The primary structure comprises 197 residues: Ribonuclease HII (197 aa).

The 189-residue stretch at 9 to 197 folds into the RNase H type-2 domain; the sequence is KLIAGVDEVG…APVKKALEQF (189 aa). A divalent metal cation-binding residues include Asp15, Glu16, and Asp107.

Belongs to the RNase HII family. It depends on Mn(2+) as a cofactor. Mg(2+) serves as cofactor.

It localises to the cytoplasm. It carries out the reaction Endonucleolytic cleavage to 5'-phosphomonoester.. Functionally, endonuclease that specifically degrades the RNA of RNA-DNA hybrids. The protein is Ribonuclease HII (rnhB) of Haemophilus influenzae (strain ATCC 51907 / DSM 11121 / KW20 / Rd).